Consider the following 609-residue polypeptide: Interleukin-1 receptor-associated kinase 3 (609 aa).

Positions 41–106 (WRGLAERLSN…RAIHLIINYG (66 aa)) constitute a Death domain. Position 110 is a phosphothreonine (Thr110). The 286-residue stretch at 178–463 (FHKDFLIGEG…SSLESTQPSL (286 aa)) folds into the Protein kinase domain. Residues 184–192 (IGEGEIFEV), Lys205, 308–311 (SSAN), and Asp324 each bind ATP. A Phosphoserine modification is found at Ser480.

Belongs to the protein kinase superfamily. TKL Ser/Thr protein kinase family. Pelle subfamily. Monomer. Homodimer. May interact with IRAK4 (when phosphorylated). Interacts (when phosphorylated at Thr-110) with PIN1 (via WW domain) in response to IL33-mediated (but not TLR4 ligand LPS) dendritic cell stimulation. In terms of tissue distribution, expressed in inflamed lung macrophages (at protein level). Expressed in dendritic cells (at protein level). Highly expressed in liver and thymus and at lower levels in heart, brain, spleen and kidney.

It is found in the cytoplasm. The protein localises to the nucleus. Putative inactive protein kinase which regulates signaling downstream of immune receptors including IL1R and Toll-like receptors. Inhibits dissociation of IRAK1 and IRAK4 from the Toll-like receptor signaling complex by either inhibiting the phosphorylation of IRAK1 and IRAK4 or stabilizing the receptor complex. Upon IL33-induced lung inflammation, positively regulates expression of IL6, CSF3, CXCL2 and CCL5 mRNAs in dendritic cells. In Mus musculus (Mouse), this protein is Interleukin-1 receptor-associated kinase 3.